A 171-amino-acid polypeptide reads, in one-letter code: MDLKAKLREVPDFPKEGINFIDITTVLQDPEALKECIDSMKKKVESFGEFDIIVGAESRGFIFGAPLAYALGKGFVPIRKKGKLPYKTISVEYELEYGTDILEMHIDAIKKGQRVVIVDDLLATGGTTKSNIKLVEQLGGEILGIVYFVELTFLNGREKLKGYNVESIVQY.

It belongs to the purine/pyrimidine phosphoribosyltransferase family. In terms of assembly, homodimer.

The protein localises to the cytoplasm. It carries out the reaction AMP + diphosphate = 5-phospho-alpha-D-ribose 1-diphosphate + adenine. The protein operates within purine metabolism; AMP biosynthesis via salvage pathway; AMP from adenine: step 1/1. Functionally, catalyzes a salvage reaction resulting in the formation of AMP, that is energically less costly than de novo synthesis. In Acetivibrio thermocellus (strain ATCC 27405 / DSM 1237 / JCM 9322 / NBRC 103400 / NCIMB 10682 / NRRL B-4536 / VPI 7372) (Clostridium thermocellum), this protein is Adenine phosphoribosyltransferase.